We begin with the raw amino-acid sequence, 751 residues long: Photosystem I P700 chlorophyll a apoprotein A1 (751 aa).

The next 8 membrane-spanning stretches (helical) occupy residues 73–96 (VFSA…FHGA), 159–182 (LYST…FHFH), 198–222 (LNHH…HVSL), 294–312 (TAHH…GHMY), 349–372 (WHAQ…HHQY), 388–414 (LSLF…IFMI), 436–458 (AIIS…LYIH), and 533–551 (FLVH…LILL). Residues cysteine 575 and cysteine 584 each coordinate [4Fe-4S] cluster. Helical transmembrane passes span 591–612 (HVFL…HFSW) and 665–687 (LSAY…MFLF). Residue histidine 676 participates in chlorophyll a' binding. Positions 684 and 692 each coordinate chlorophyll a. Tryptophan 693 is a binding site for phylloquinone. The helical transmembrane segment at 725 to 745 (AVGVAHYLLGGIATTWSFFLA) threads the bilayer.

The protein belongs to the PsaA/PsaB family. The PsaA/B heterodimer binds the P700 chlorophyll special pair and subsequent electron acceptors. PSI consists of a core antenna complex that captures photons, and an electron transfer chain that converts photonic excitation into a charge separation. The eukaryotic PSI reaction center is composed of at least 11 subunits. The cofactor is P700 is a chlorophyll a/chlorophyll a' dimer, A0 is one or more chlorophyll a, A1 is one or both phylloquinones and FX is a shared 4Fe-4S iron-sulfur center..

Its subcellular location is the plastid. The protein localises to the chloroplast thylakoid membrane. It carries out the reaction reduced [plastocyanin] + hnu + oxidized [2Fe-2S]-[ferredoxin] = oxidized [plastocyanin] + reduced [2Fe-2S]-[ferredoxin]. PsaA and PsaB bind P700, the primary electron donor of photosystem I (PSI), as well as the electron acceptors A0, A1 and FX. PSI is a plastocyanin/cytochrome c6-ferredoxin oxidoreductase, converting photonic excitation into a charge separation, which transfers an electron from the donor P700 chlorophyll pair to the spectroscopically characterized acceptors A0, A1, FX, FA and FB in turn. Oxidized P700 is reduced on the lumenal side of the thylakoid membrane by plastocyanin or cytochrome c6. This chain is Photosystem I P700 chlorophyll a apoprotein A1, found in Tupiella akineta (Green alga).